Consider the following 502-residue polypeptide: uncharacterized protein (502 aa).

2 helical membrane passes run 10–30 (NLTLNLTIIFLIFCNISIXIF) and 473–493 (FSLIIVNLIILPTIILIFGLV).

The protein resides in the cell membrane. This is an uncharacterized protein from Borreliella burgdorferi (strain ATCC 35210 / DSM 4680 / CIP 102532 / B31) (Borrelia burgdorferi).